The primary structure comprises 452 residues: Solute carrier family 52, riboflavin transporter, member 3-B (452 aa).

5 helical membrane passes run leucine 11–valine 31, tryptophan 38–isoleucine 58, proline 73–tryptophan 93, leucine 111–methionine 131, and leucine 138–valine 158. Residues asparagine 168, asparagine 174, asparagine 179, and asparagine 193 are each glycosylated (N-linked (GlcNAc...) asparagine). The next 6 membrane-spanning stretches (helical) occupy residues phenylalanine 199–leucine 219, valine 285–valine 305, alanine 321–isoleucine 341, leucine 344–methionine 364, alanine 381–isoleucine 401, and alanine 412–phenylalanine 432.

It belongs to the riboflavin transporter family.

It localises to the cell membrane. It catalyses the reaction riboflavin(in) = riboflavin(out). Plasma membrane transporter mediating the uptake by cells of the water soluble vitamin B2/riboflavin that plays a key role in biochemical oxidation-reduction reactions of the carbohydrate, lipid, and amino acid metabolism. This chain is Solute carrier family 52, riboflavin transporter, member 3-B (slc52a3b), found in Danio rerio (Zebrafish).